The primary structure comprises 683 residues: Putative boron transporter 5 (683 aa).

Over 1-38 (MEEERVEGSKRPFQGIIRDVKGRALCYKQDWIAGLRSG) the chain is Cytoplasmic. Residues 39–59 (FGILAPTTYVFFASALPVIAF) form a helical membrane-spanning segment. Topologically, residues 60–80 (GEQLSHDTERSLSTVETLAST) are extracellular. The helical transmembrane segment at 81-101 (ALCGVIHSLLGGQPLLILGVA) threads the bilayer. At 102-126 (EPTVLMYKYLYDFAKGRPELGKQLY) the chain is on the cytoplasmic side. A helical membrane pass occupies residues 127–147 (LAWVAWVCVWTALLLFLMAIF). Residues 148–158 (NMAYIINRFTR) are Extracellular-facing. Residues 159–179 (IAGELFGMLIAVLFLQQTIKG) traverse the membrane as a helical segment. The Cytoplasmic portion of the chain corresponds to 180–200 (MVSEFRIPKGEDSKLEKYQFE). A helical membrane pass occupies residues 201–221 (WLYTNGLLGLIFTVGLVYTAL). Residues 222-238 (KSRKARSWPYGTGCCRS) are Extracellular-facing. A helical transmembrane segment spans residues 239 to 259 (FVADYGVPLMVVVWTALSFST). Residues 260–294 (PSKLPSGVPRRLVSPLPWDSVSLTHWTVIKDMGKV) are Cytoplasmic-facing. Residues 295-315 (SPGYIFAAFIPALMIAGLYFF) traverse the membrane as a helical segment. Over 316-335 (DHSVVSQLAQQKEFNLKNPS) the chain is Extracellular. The helical transmembrane segment at 336 to 356 (AYHYDILLLGFMVLICGMLGL) threads the bilayer. Over 357-477 (PPSNGVLPQS…EQRVSNLLQS (121 aa)) the chain is Cytoplasmic. A helical transmembrane segment spans residues 478–498 (LLVIGAVFALPVIKLIPTSLL). Residues 499–565 (WGYFAYMAID…QILYFGLCYG (67 aa)) lie on the Extracellular side of the membrane. The chain crosses the membrane as a helical span at residues 566–586 (VTWIPVAGIMFPVLFFLLVAI). The Cytoplasmic segment spans residues 587–683 (RQYLLPKLFK…GDGDMSSSRE (97 aa)).

This sequence belongs to the anion exchanger (TC 2.A.31.3) family.

Its subcellular location is the membrane. Its function is as follows. Putative boron transporter. Boron is essential for maintaining the integrity of plants cell walls. The polypeptide is Putative boron transporter 5 (BOR5) (Arabidopsis thaliana (Mouse-ear cress)).